The chain runs to 359 residues: MGHAAGASAQIAPVVGIIANPISARDIRRVIANANSLQLADRVNIVLRLLAALASCGVERVLMMPDREGLRVMLARHLARRQGPDSGLPAVDYLDMPVTARVDDTLRAARCMADAGVAAIIVLGGDGTHRAVVRECGAVPIAGLSTGTNNAYPEMREPTIIGLATGLYATGRIPPAQALASNKRLDIVIRDGNGGFRRDIALVDAVISHEHFIGARALWKTDTLAAVYVSFADPEAIGLSSIAGLLEPVGRREEGGLAIELAAPGEGEFDLCAPIAPGLMCTVPVAGWQRLEHGRPHRVRQRSGIVALDGERELAFGPDDEVTVTLHDHAFRSIDVAACMRHAGRHHLMRSLPQPAAVG.

It localises to the cell membrane. Its pathway is ketone degradation; acetoin degradation. Functionally, essential for acetoin catabolism. The protein is Acetoin catabolism protein X (acoX) of Cupriavidus necator (strain ATCC 17699 / DSM 428 / KCTC 22496 / NCIMB 10442 / H16 / Stanier 337) (Ralstonia eutropha).